The sequence spans 172 residues: 3-hydroxydecanoyl-[acyl-carrier-protein] dehydratase (172 aa).

His-71 is an active-site residue.

Belongs to the thioester dehydratase family. FabA subfamily. As to quaternary structure, homodimer.

The protein resides in the cytoplasm. The catalysed reaction is a (3R)-hydroxyacyl-[ACP] = a (2E)-enoyl-[ACP] + H2O. It carries out the reaction (3R)-hydroxydecanoyl-[ACP] = (2E)-decenoyl-[ACP] + H2O. It catalyses the reaction (2E)-decenoyl-[ACP] = (3Z)-decenoyl-[ACP]. It participates in lipid metabolism; fatty acid biosynthesis. Its function is as follows. Necessary for the introduction of cis unsaturation into fatty acids. Catalyzes the dehydration of (3R)-3-hydroxydecanoyl-ACP to E-(2)-decenoyl-ACP and then its isomerization to Z-(3)-decenoyl-ACP. Can catalyze the dehydratase reaction for beta-hydroxyacyl-ACPs with saturated chain lengths up to 16:0, being most active on intermediate chain length. This is 3-hydroxydecanoyl-[acyl-carrier-protein] dehydratase from Serratia proteamaculans (strain 568).